Here is a 442-residue protein sequence, read N- to C-terminus: tRNA modification GTPase MnmE (442 aa).

Residues Arg24, Glu84, and Arg124 each contribute to the (6S)-5-formyl-5,6,7,8-tetrahydrofolate site. The 149-residue stretch at 218–366 folds into the TrmE-type G domain; it reads GARVALFGPV…LRDDMLGRLW (149 aa). Residues 228–233, 247–253, and 272–275 each bind GTP; these read NAGKST, DDEPGTT, and DTAG. 2 residues coordinate Mg(2+): Ser232 and Thr253. A (6S)-5-formyl-5,6,7,8-tetrahydrofolate-binding site is contributed by Lys442.

Belongs to the TRAFAC class TrmE-Era-EngA-EngB-Septin-like GTPase superfamily. TrmE GTPase family. In terms of assembly, homodimer. Heterotetramer of two MnmE and two MnmG subunits. K(+) serves as cofactor.

The protein localises to the cytoplasm. Its function is as follows. Exhibits a very high intrinsic GTPase hydrolysis rate. Involved in the addition of a carboxymethylaminomethyl (cmnm) group at the wobble position (U34) of certain tRNAs, forming tRNA-cmnm(5)s(2)U34. This Myxococcus xanthus (strain DK1622) protein is tRNA modification GTPase MnmE.